Reading from the N-terminus, the 165-residue chain is Crossover junction endodeoxyribonuclease RuvC (165 aa).

Catalysis depends on residues D6, E67, and D142. Mg(2+) is bound by residues D6, E67, and D142.

Belongs to the RuvC family. Homodimer which binds Holliday junction (HJ) DNA. The HJ becomes 2-fold symmetrical on binding to RuvC with unstacked arms; it has a different conformation from HJ DNA in complex with RuvA. In the full resolvosome a probable DNA-RuvA(4)-RuvB(12)-RuvC(2) complex forms which resolves the HJ. Mg(2+) serves as cofactor.

It localises to the cytoplasm. The enzyme catalyses Endonucleolytic cleavage at a junction such as a reciprocal single-stranded crossover between two homologous DNA duplexes (Holliday junction).. Functionally, the RuvA-RuvB-RuvC complex processes Holliday junction (HJ) DNA during genetic recombination and DNA repair. Endonuclease that resolves HJ intermediates. Cleaves cruciform DNA by making single-stranded nicks across the HJ at symmetrical positions within the homologous arms, yielding a 5'-phosphate and a 3'-hydroxyl group; requires a central core of homology in the junction. The consensus cleavage sequence is 5'-(A/T)TT(C/G)-3'. Cleavage occurs on the 3'-side of the TT dinucleotide at the point of strand exchange. HJ branch migration catalyzed by RuvA-RuvB allows RuvC to scan DNA until it finds its consensus sequence, where it cleaves and resolves the cruciform DNA. The chain is Crossover junction endodeoxyribonuclease RuvC from Chlamydia abortus (strain DSM 27085 / S26/3) (Chlamydophila abortus).